The primary structure comprises 198 residues: Pyridoxal 5'-phosphate synthase subunit PdxT (198 aa).

50-52 (GES) contributes to the L-glutamine binding site. Cysteine 82 serves as the catalytic Nucleophile. Residues arginine 114 and 143–144 (IR) contribute to the L-glutamine site. Active-site charge relay system residues include histidine 179 and glutamate 181.

This sequence belongs to the glutaminase PdxT/SNO family. In terms of assembly, in the presence of PdxS, forms a dodecamer of heterodimers. Only shows activity in the heterodimer.

The catalysed reaction is aldehydo-D-ribose 5-phosphate + D-glyceraldehyde 3-phosphate + L-glutamine = pyridoxal 5'-phosphate + L-glutamate + phosphate + 3 H2O + H(+). The enzyme catalyses L-glutamine + H2O = L-glutamate + NH4(+). It participates in cofactor biosynthesis; pyridoxal 5'-phosphate biosynthesis. In terms of biological role, catalyzes the hydrolysis of glutamine to glutamate and ammonia as part of the biosynthesis of pyridoxal 5'-phosphate. The resulting ammonia molecule is channeled to the active site of PdxS. The chain is Pyridoxal 5'-phosphate synthase subunit PdxT from Metallosphaera sedula (strain ATCC 51363 / DSM 5348 / JCM 9185 / NBRC 15509 / TH2).